Consider the following 202-residue polypeptide: 3-isopropylmalate dehydratase small subunit 1 (202 aa).

The protein belongs to the LeuD family. LeuD type 1 subfamily. In terms of assembly, heterodimer of LeuC and LeuD.

It catalyses the reaction (2R,3S)-3-isopropylmalate = (2S)-2-isopropylmalate. Its pathway is amino-acid biosynthesis; L-leucine biosynthesis; L-leucine from 3-methyl-2-oxobutanoate: step 2/4. In terms of biological role, catalyzes the isomerization between 2-isopropylmalate and 3-isopropylmalate, via the formation of 2-isopropylmaleate. This is 3-isopropylmalate dehydratase small subunit 1 from Bordetella pertussis (strain Tohama I / ATCC BAA-589 / NCTC 13251).